Here is a 94-residue protein sequence, read N- to C-terminus: C-C motif chemokine 26 (94 aa).

The first 23 residues, 1-23, serve as a signal peptide directing secretion; sequence MMGLSLASAVLLASLLSLHLGTA. Disulfide bonds link cysteine 33/cysteine 57 and cysteine 34/cysteine 73.

It belongs to the intercrine beta (chemokine CC) family. Monomer. Ubiquitously expressed at low levels in various tissues including heart and ovary.

The protein resides in the secreted. Chemoattractant for eosinophils and basophils. Acts as a ligand for C-C chemokine receptor CCR3 which triggers Ca(2+) mobilization in eosinophils. Also acts as a ligand for CX3C chemokine receptor CX3CR1, inducing cell chemotaxis. This Homo sapiens (Human) protein is C-C motif chemokine 26.